The sequence spans 364 residues: Aminomethyltransferase (364 aa).

This sequence belongs to the GcvT family. The glycine cleavage system is composed of four proteins: P, T, L and H.

It carries out the reaction N(6)-[(R)-S(8)-aminomethyldihydrolipoyl]-L-lysyl-[protein] + (6S)-5,6,7,8-tetrahydrofolate = N(6)-[(R)-dihydrolipoyl]-L-lysyl-[protein] + (6R)-5,10-methylene-5,6,7,8-tetrahydrofolate + NH4(+). The glycine cleavage system catalyzes the degradation of glycine. The chain is Aminomethyltransferase from Staphylococcus carnosus (strain TM300).